The following is a 414-amino-acid chain: MIOREX complex component 10 (414 aa).

The transit peptide at 1–29 (MLSFRSLTSTFGFVSRFQIRRLGTSLSIQ) directs the protein to the mitochondrion. The Mitochondrial matrix portion of the chain corresponds to 30–373 (NLEVQDGRWK…ISLLNERNST (344 aa)). The helical transmembrane segment at 374 to 394 (FLEWIIIYLIAFELCFEIYHF) threads the bilayer. The Mitochondrial intermembrane segment spans residues 395 to 414 (YQKYSSYCSEPTNDDLDATK).

The protein belongs to the RMD1/sif2 family. As to quaternary structure, associates with the mitochondrial ribosome.

The protein resides in the mitochondrion inner membrane. In terms of biological role, component of MIOREX complexes, large expressome-like assemblies of ribosomes with factors involved in all the steps of post-transcriptional gene expression. This chain is MIOREX complex component 10, found in Saccharomyces cerevisiae (strain ATCC 204508 / S288c) (Baker's yeast).